Here is a 145-residue protein sequence, read N- to C-terminus: D-aminoacyl-tRNA deacylase (145 aa).

The Gly-cisPro motif, important for rejection of L-amino acids motif lies at 137–138 (GP).

The protein belongs to the DTD family. As to quaternary structure, homodimer.

It is found in the cytoplasm. The enzyme catalyses glycyl-tRNA(Ala) + H2O = tRNA(Ala) + glycine + H(+). It catalyses the reaction a D-aminoacyl-tRNA + H2O = a tRNA + a D-alpha-amino acid + H(+). Functionally, an aminoacyl-tRNA editing enzyme that deacylates mischarged D-aminoacyl-tRNAs. Also deacylates mischarged glycyl-tRNA(Ala), protecting cells against glycine mischarging by AlaRS. Acts via tRNA-based rather than protein-based catalysis; rejects L-amino acids rather than detecting D-amino acids in the active site. By recycling D-aminoacyl-tRNA to D-amino acids and free tRNA molecules, this enzyme counteracts the toxicity associated with the formation of D-aminoacyl-tRNA entities in vivo and helps enforce protein L-homochirality. The sequence is that of D-aminoacyl-tRNA deacylase from Shewanella woodyi (strain ATCC 51908 / MS32).